The chain runs to 480 residues: Initiation-specific alpha-1,6-mannosyltransferase (480 aa).

The Cytoplasmic portion of the chain corresponds to 1–15 (MSRKLSHLIATRKSK). Residues 16–30 (TIVVTVLLIYSLLTF) form a helical; Signal-anchor for type II membrane protein membrane-spanning segment. At 31–480 (HLSNKRLLSQ…EDADKNAGHK (450 aa)) the chain is on the lumenal side. The short motif at 187–189 (DMD) is the DXD motif element. N-linked (GlcNAc...) asparagine glycosylation is found at N203, N281, N341, and N393.

It belongs to the glycosyltransferase 32 family. The cofactor is Mn(2+). Glycosylated.

The protein localises to the endoplasmic reticulum membrane. It localises to the golgi apparatus membrane. The catalysed reaction is Transfers an alpha-D-mannosyl residue from GDP-mannose into lipid-linked oligosaccharide, forming an alpha-(1-&gt;6)-D-mannosyl-D-mannose linkage.. In terms of biological role, mannosyltransferase involved in outer chain elongation of asparagine-linked oligosaccharides of the type Man(9)GlcNAc(2). Adds the first alpha-1,6-mannose to the Man(8)GlcNAc(2) and Man(9)GlcNAc(2), but not Man(5)GlcNAc(2), endoplasmic reticulum intermediates. Represents the first enzymatic event required for synthesis of outer chain mannose linkages on yeast secretory proteins. Also has the potential to transfer a second alpha-1,6-mannose to the Man(8)GlcNAc(2) core oligosaccharide. The sequence is that of Initiation-specific alpha-1,6-mannosyltransferase from Saccharomyces cerevisiae (strain ATCC 204508 / S288c) (Baker's yeast).